A 176-amino-acid chain; its full sequence is ATP synthase subunit delta (176 aa).

The protein belongs to the ATPase delta chain family. As to quaternary structure, F-type ATPases have 2 components, F(1) - the catalytic core - and F(0) - the membrane proton channel. F(1) has five subunits: alpha(3), beta(3), gamma(1), delta(1), epsilon(1). F(0) has three main subunits: a(1), b(2) and c(10-14). The alpha and beta chains form an alternating ring which encloses part of the gamma chain. F(1) is attached to F(0) by a central stalk formed by the gamma and epsilon chains, while a peripheral stalk is formed by the delta and b chains.

Its subcellular location is the cell inner membrane. F(1)F(0) ATP synthase produces ATP from ADP in the presence of a proton or sodium gradient. F-type ATPases consist of two structural domains, F(1) containing the extramembraneous catalytic core and F(0) containing the membrane proton channel, linked together by a central stalk and a peripheral stalk. During catalysis, ATP synthesis in the catalytic domain of F(1) is coupled via a rotary mechanism of the central stalk subunits to proton translocation. In terms of biological role, this protein is part of the stalk that links CF(0) to CF(1). It either transmits conformational changes from CF(0) to CF(1) or is implicated in proton conduction. The chain is ATP synthase subunit delta from Campylobacter concisus (strain 13826).